The following is a 275-amino-acid chain: Formamidopyrimidine-DNA glycosylase (275 aa).

Catalysis depends on Pro2, which acts as the Schiff-base intermediate with DNA. The active-site Proton donor is the Glu3. Lys59 serves as the catalytic Proton donor; for beta-elimination activity. DNA-binding residues include His94 and Arg113. The segment at 241–275 (LVHTHAKEPCQICGTIIQKTKVNGRGTYYCPNCQN) adopts an FPG-type zinc-finger fold. The active-site Proton donor; for delta-elimination activity is the Arg265.

Belongs to the FPG family. In terms of assembly, monomer. The cofactor is Zn(2+).

The catalysed reaction is Hydrolysis of DNA containing ring-opened 7-methylguanine residues, releasing 2,6-diamino-4-hydroxy-5-(N-methyl)formamidopyrimidine.. It catalyses the reaction 2'-deoxyribonucleotide-(2'-deoxyribose 5'-phosphate)-2'-deoxyribonucleotide-DNA = a 3'-end 2'-deoxyribonucleotide-(2,3-dehydro-2,3-deoxyribose 5'-phosphate)-DNA + a 5'-end 5'-phospho-2'-deoxyribonucleoside-DNA + H(+). In terms of biological role, involved in base excision repair of DNA damaged by oxidation or by mutagenic agents. Acts as a DNA glycosylase that recognizes and removes damaged bases. Has a preference for oxidized purines, such as 7,8-dihydro-8-oxoguanine (8-oxoG). Has AP (apurinic/apyrimidinic) lyase activity and introduces nicks in the DNA strand. Cleaves the DNA backbone by beta-delta elimination to generate a single-strand break at the site of the removed base with both 3'- and 5'-phosphates. The chain is Formamidopyrimidine-DNA glycosylase from Ureaplasma parvum serovar 3 (strain ATCC 700970).